We begin with the raw amino-acid sequence, 329 residues long: Ornithine carbamoyltransferase (329 aa).

Carbamoyl phosphate is bound by residues 51–54 (STRT), Gln78, Arg102, and 129–132 (HPVQ). L-ornithine-binding positions include Asn174, Asp238, and 242 to 243 (SM). Residues 278–279 (CL) and Arg306 contribute to the carbamoyl phosphate site.

Belongs to the aspartate/ornithine carbamoyltransferase superfamily. OTCase family.

Its subcellular location is the cytoplasm. It carries out the reaction carbamoyl phosphate + L-ornithine = L-citrulline + phosphate + H(+). It functions in the pathway amino-acid biosynthesis; L-arginine biosynthesis; L-arginine from L-ornithine and carbamoyl phosphate: step 1/3. Reversibly catalyzes the transfer of the carbamoyl group from carbamoyl phosphate (CP) to the N(epsilon) atom of ornithine (ORN) to produce L-citrulline. This chain is Ornithine carbamoyltransferase, found in Helicobacter hepaticus (strain ATCC 51449 / 3B1).